The following is a 119-amino-acid chain: Ribosome-binding factor A (119 aa).

Belongs to the RbfA family. As to quaternary structure, monomer. Binds 30S ribosomal subunits, but not 50S ribosomal subunits or 70S ribosomes.

The protein localises to the cytoplasm. One of several proteins that assist in the late maturation steps of the functional core of the 30S ribosomal subunit. Associates with free 30S ribosomal subunits (but not with 30S subunits that are part of 70S ribosomes or polysomes). Required for efficient processing of 16S rRNA. May interact with the 5'-terminal helix region of 16S rRNA. This is Ribosome-binding factor A from Pseudothermotoga lettingae (strain ATCC BAA-301 / DSM 14385 / NBRC 107922 / TMO) (Thermotoga lettingae).